The following is a 444-amino-acid chain: Methylenetetrahydrofolate--tRNA-(uracil-5-)-methyltransferase TrmFO (444 aa).

An FAD-binding site is contributed by 10–15 (GAGLAG).

Belongs to the MnmG family. TrmFO subfamily. It depends on FAD as a cofactor.

The protein resides in the cytoplasm. The enzyme catalyses uridine(54) in tRNA + (6R)-5,10-methylene-5,6,7,8-tetrahydrofolate + NADH + H(+) = 5-methyluridine(54) in tRNA + (6S)-5,6,7,8-tetrahydrofolate + NAD(+). It carries out the reaction uridine(54) in tRNA + (6R)-5,10-methylene-5,6,7,8-tetrahydrofolate + NADPH + H(+) = 5-methyluridine(54) in tRNA + (6S)-5,6,7,8-tetrahydrofolate + NADP(+). Its function is as follows. Catalyzes the folate-dependent formation of 5-methyl-uridine at position 54 (M-5-U54) in all tRNAs. The protein is Methylenetetrahydrofolate--tRNA-(uracil-5-)-methyltransferase TrmFO of Streptococcus equi subsp. equi (strain 4047).